Consider the following 381-residue polypeptide: Cytochrome b (381 aa).

A run of 4 helical transmembrane segments spans residues 34–54 (FGSL…FLAM), 78–99 (WLIR…YLHI), 114–134 (WNIG…GYVL), and 179–199 (FFAF…IHLL). Heme b contacts are provided by histidine 84 and histidine 98. Positions 183 and 197 each coordinate heme b. An a ubiquinone-binding site is contributed by histidine 202. 4 helical membrane-spanning segments follow: residues 227 to 247 (YKDL…ALFL), 289 to 309 (LGGV…PMLH), 321 to 341 (MTQF…WIGG), and 348 to 368 (FILV…IIIP).

Belongs to the cytochrome b family. As to quaternary structure, the cytochrome bc1 complex contains 3 respiratory subunits (MT-CYB, CYC1 and UQCRFS1), 2 core proteins (UQCRC1 and UQCRC2) and probably 6 low-molecular weight proteins. Heme b is required as a cofactor.

It localises to the mitochondrion inner membrane. Its function is as follows. Component of the ubiquinol-cytochrome c reductase complex (complex III or cytochrome b-c1 complex) that is part of the mitochondrial respiratory chain. The b-c1 complex mediates electron transfer from ubiquinol to cytochrome c. Contributes to the generation of a proton gradient across the mitochondrial membrane that is then used for ATP synthesis. The polypeptide is Cytochrome b (mt-cyb) (Squalus acanthias (Spiny dogfish)).